The primary structure comprises 507 residues: Protein adenylyltransferase fic-1 (507 aa).

A helical transmembrane segment spans residues 40 to 56 (YSLTTVVLVSLVVTLVC). TPR repeat units lie at residues 146–179 (AILAAKAASRSRRDGNLERAVTIMEHAMALAPNN) and 180–213 (PQILIEMGQIREMHNELVEADQCYVKALAYDPGN). The Inhibitory (S/T)XXXE(G/N) motif motif lies at 269 to 274 (TVAIEG). Position 273 (Glu-273) interacts with ATP. In terms of domain architecture, Fido spans 325–460 (ISIDDILEMH…LRPFVRYVAK (136 aa)). O-AMP-threonine; by autocatalysis is present on Thr-351. Residue 356 to 359 (VGKF) coordinates ATP. His-403 is an active-site residue. Residues 407–414 (DGNGRTAR), 439–440 (YY), and Asn-447 contribute to the ATP site. An O-AMP-threonine; by autocatalysis modification is found at Thr-475. The tract at residues 482-507 (NGEEPNLTAEESKVSEKIETECRAGS) is disordered. Positions 491-507 (EESKVSEKIETECRAGS) are enriched in basic and acidic residues.

This sequence belongs to the fic family. As to quaternary structure, forms homodimers; homodimerization might be required for adenylyltransferase activity.

Its subcellular location is the endoplasmic reticulum membrane. The protein resides in the nucleus membrane. The catalysed reaction is L-tyrosyl-[protein] + ATP = O-(5'-adenylyl)-L-tyrosyl-[protein] + diphosphate. It catalyses the reaction L-threonyl-[protein] + ATP = 3-O-(5'-adenylyl)-L-threonyl-[protein] + diphosphate. It carries out the reaction 3-O-(5'-adenylyl)-L-threonyl-[protein] + H2O = L-threonyl-[protein] + AMP + H(+). The side chain of Glu-273 determines which of the two opposing activities (AMPylase or de-AMPylase) will take place. In response to endoplasmic reticulum stress, mediates de-AMPylase activity. Adenylyltransferase activity is inhibited by the inhibitory helix present at the N-terminus: Glu-273 binds ATP and competes with ATP-binding at Arg-414, thereby preventing adenylyltransferase activity. In unstressed cells, disengagement of Glu-273 promotes adenylyltransferase activity. Activation dissociates ATP-binding from Glu-273, allowing ordered binding of the entire ATP moiety with the alpha-phosphate in an orientation that is productive for accepting an incoming target hydroxyl side chain. Protein that can both mediate the addition of adenosine 5'-monophosphate (AMP) to specific residues of target proteins (AMPylation), and the removal of the same modification from target proteins (de-AMPylation), depending on the context. The side chain of Glu-273 determines which of the two opposing activities (AMPylase or de-AMPylase) will take place. Adenylyltransferase that mediates the addition of adenosine 5'-monophosphate (AMP) to specific residues of target proteins. In vivo target proteins include the heat-shock 70 family proteins hsp-1 and hsp-3 and the translation elongation factors eef-1A, eef-1G and eef-2. Can AMPylate core histone H3 in vitro. Can also act as a phosphodiesterase by mediating removal of ATP (de-AMPylation) from target proteins. Decreases susceptibility to P.aeruginosa-mediated killing and might therefore play a role in the innate immune response. The polypeptide is Protein adenylyltransferase fic-1 (fic-1) (Caenorhabditis briggsae).